A 119-amino-acid polypeptide reads, in one-letter code: Ribonuclease P protein component (119 aa).

The segment at 1-24 (MRGSSRFRPHEKLRASDDYQRVKR) is disordered. Positions 8–21 (RPHEKLRASDDYQR) are enriched in basic and acidic residues.

It belongs to the RnpA family. In terms of assembly, consists of a catalytic RNA component (M1 or rnpB) and a protein subunit.

It carries out the reaction Endonucleolytic cleavage of RNA, removing 5'-extranucleotides from tRNA precursor.. RNaseP catalyzes the removal of the 5'-leader sequence from pre-tRNA to produce the mature 5'-terminus. It can also cleave other RNA substrates such as 4.5S RNA. The protein component plays an auxiliary but essential role in vivo by binding to the 5'-leader sequence and broadening the substrate specificity of the ribozyme. The polypeptide is Ribonuclease P protein component (Syntrophobacter fumaroxidans (strain DSM 10017 / MPOB)).